Consider the following 505-residue polypeptide: MAWENVRVRVAPSPTGDPHVGTAYMALFNEIFAKRFKGKMILRIEDTDRTRSRDDYEKNIFSALQWCGIQWDEGPDVGGPCGPYRQSERTEIYKKYAELLLKTDYAYKCFATPKELEEMRAVATTLGYRGGYDRRYRYLSPEEIEARTLEGQPYTIRLKVPLTGECVLEDYCKGRVVFPWADVDDQVLIKSDGFPTYHFANVVDDHLMGITHVLRGEEWLSSTPKHLLLYEAFGWKAPTFLHMPLLLNPDGTKLSKRKNPTSIFYYRDSGYVKEAFVNFLTLMGYSMEGDEEVYSLEKLIENFDPKRIGKSGAVFDTRKLDWMNKHYLTHDGSPEHLLSRLKDWLINDEFFLKILPLCQSRITTLAEFIGFTGFFFSVLPEYTKEELLPAAISAEKAAILLYSYVKYLEKADLWVKDQFYQGSKWLSEAFQVHHKKVVIPLLYVAITGKKQGLPLFDSMELLGKPRTRMRIVHAQNLLGGVPKKVQAVIDKVLKEEDFESKTLEF.

A 'HIGH' region motif is present at residues 12–22 (PSPTGDPHVGT). The 'KMSKS' region signature appears at 253 to 257 (KLSKR). ATP is bound at residue Lys256.

The protein belongs to the class-I aminoacyl-tRNA synthetase family. Glutamate--tRNA ligase type 1 subfamily. In terms of assembly, monomer.

The protein resides in the cytoplasm. It catalyses the reaction tRNA(Glu) + L-glutamate + ATP = L-glutamyl-tRNA(Glu) + AMP + diphosphate. Catalyzes the attachment of glutamate to tRNA(Glu) in a two-step reaction: glutamate is first activated by ATP to form Glu-AMP and then transferred to the acceptor end of tRNA(Glu). This is Glutamate--tRNA ligase from Chlamydia felis (strain Fe/C-56) (Chlamydophila felis).